We begin with the raw amino-acid sequence, 360 residues long: MTEFSSKERYTMIRVLVIDDSATMRILLKKLIDKNEHMECVGVAPNPVAAQELLRETRPDVITLDIEMPKMNGLDFLDRIMRLMPVAVIMISTLTEAGSESALRALELGAIDFIAKPKLDFAEGVQAYAEEIYRKIETAGRAKVKKLTRDVPPVRMDAEPPAKPLLAEAGKDGRVVAVGASTGGTEAVKELLLSLPADCPPLLIAQHMPEPFMRSLAKRLDLLCAMRVKMAEDGETLRRGCVYIAPGHSNLTIDATAAGYVCRIVRNAGEAQSDSSVDELFRSVAAAAGARGVGIVLTGSGSDGAAGARAMMAAGAFNIAQDAETSVVYSMPDAAIAACGINEVLPLEKIAGKLMELDGA.

One can recognise a Response regulatory domain in the interval Arg14–Glu131. Asp65 bears the 4-aspartylphosphate mark. In terms of domain architecture, CheB-type methylesterase spans Ala169 to Ala360. Catalysis depends on residues Ser181, His207, and Asp303.

It belongs to the CheB family. In terms of processing, phosphorylated by CheA. Phosphorylation of the N-terminal regulatory domain activates the methylesterase activity.

It localises to the cytoplasm. The catalysed reaction is [protein]-L-glutamate 5-O-methyl ester + H2O = L-glutamyl-[protein] + methanol + H(+). It carries out the reaction L-glutaminyl-[protein] + H2O = L-glutamyl-[protein] + NH4(+). In terms of biological role, involved in chemotaxis. Part of a chemotaxis signal transduction system that modulates chemotaxis in response to various stimuli. Catalyzes the demethylation of specific methylglutamate residues introduced into the chemoreceptors (methyl-accepting chemotaxis proteins or MCP) by CheR. Also mediates the irreversible deamidation of specific glutamine residues to glutamic acid. This chain is Protein-glutamate methylesterase/protein-glutamine glutaminase 3, found in Burkholderia thailandensis (strain ATCC 700388 / DSM 13276 / CCUG 48851 / CIP 106301 / E264).